The sequence spans 907 residues: Envelope glycoprotein B (907 aa).

The signal sequence occupies residues 1 to 24 (MESRIWCLVVCVNLCIVCLGAAVS). At 25–751 (SSSTRGTSAT…EGVATFLKNP (727 aa)) the chain is on the virion surface side. The interval 29–62 (RGTSATHSHHSSHTTSAAHSRSGSVSQRVTSSQT) is disordered. Residues 41–62 (HTTSAAHSRSGSVSQRVTSSQT) are compositionally biased toward low complexity. Residues Asn-68, Asn-73, and Asn-85 are each glycosylated (N-linked (GlcNAc...) asparagine; by host). 4 disulfide bridges follow: Cys-94-Cys-551, Cys-111-Cys-507, Cys-185-Cys-250, and Cys-344-Cys-391. The tract at residues 152 to 158 (SYAYIHT) is involved in fusion and/or binding to host membrane. The N-linked (GlcNAc...) asparagine; by host glycan is linked to Asn-208. The tract at residues 237–244 (GSTWLYRE) is involved in fusion and/or binding to host membrane. N-linked (GlcNAc...) asparagine; by host glycosylation is found at Asn-281, Asn-286, Asn-302, Asn-341, Asn-383, Asn-405, Asn-409, Asn-417, Asn-447, Asn-452, Asn-456, Asn-466, Asn-555, and Asn-586. Cys-574 and Cys-611 form a disulfide bridge. The hydrophobic membrane proximal region stretch occupies residues 697–749 (VEDKVVDPLPPYLKGLDDLMSGLGAAGKAVGVAIGAVGGAVASVVEGVATFLK). Residues 752–772 (FGAFTIILVAIAVVIITYLIY) form a helical membrane-spanning segment. Residues 773–907 (TRQRRLCTQP…LKDSDEEENV (135 aa)) are Intravirion-facing. Composition is skewed to polar residues over residues 798-810 (VTSGSTKDTSLQA) and 860-877 (RAQQNGTDSLDGRTGTQD). Disordered regions lie at residues 798-838 (VTSG…TAAP) and 857-907 (AEQR…EENV). A compositionally biased stretch (basic and acidic residues) spans 878–887 (KGQKPNLLDR). An Internalization motif motif is present at residues 895-898 (YRHL).

It belongs to the herpesviridae glycoprotein B family. As to quaternary structure, homotrimer; disulfide-linked. Binds to heparan sulfate proteoglycans. Interacts with gH/gL heterodimer. In terms of processing, a proteolytic cleavage by host furin generates two subunits that remain linked by disulfide bonds.

It is found in the virion membrane. The protein localises to the host cell membrane. The protein resides in the host endosome membrane. Its subcellular location is the host Golgi apparatus membrane. In terms of biological role, envelope glycoprotein that forms spikes at the surface of virion envelope. Essential for the initial attachment to heparan sulfate moieties of the host cell surface proteoglycans. Involved in fusion of viral and cellular membranes leading to virus entry into the host cell. Following initial binding to its host receptors, membrane fusion is mediated by the fusion machinery composed at least of gB and the heterodimer gH/gL. May be involved in the fusion between the virion envelope and the outer nuclear membrane during virion egress. The chain is Envelope glycoprotein B from Human cytomegalovirus (strain Merlin) (HHV-5).